Consider the following 489-residue polypeptide: UDP-N-acetylmuramate--L-alanine ligase (489 aa).

Residue 128–134 coordinates ATP; sequence GTHGKTT.

This sequence belongs to the MurCDEF family.

The protein resides in the cytoplasm. The catalysed reaction is UDP-N-acetyl-alpha-D-muramate + L-alanine + ATP = UDP-N-acetyl-alpha-D-muramoyl-L-alanine + ADP + phosphate + H(+). Its pathway is cell wall biogenesis; peptidoglycan biosynthesis. Functionally, cell wall formation. The chain is UDP-N-acetylmuramate--L-alanine ligase from Shewanella sediminis (strain HAW-EB3).